Here is a 456-residue protein sequence, read N- to C-terminus: MLKVAIVGKPNVGKSTLFNRLIKNRIAIVDDTPGITRDRIFGDVEWLTKRFQIIDTGGLTTESDVFQRAIEQQVQFAIDEADIILFVCSYKEGINADDHYAAKLLKKHKNKKIIFVLNKIENQNKDQLNLSSYFSLGFGKPMIISAEHAIGIGDLLDEIIGLKDQFGNKKEQELVATFCIIGKPNVGKSSLLNQLLKKERVLVSDIPGTTRDAIDATFSYNKELYKVIDTAGIRRKGKIATRIEKFSVQRTQQAISRSKMILLMLDGSVDLSEQDEVIGGLCYEANLPTIIVVNKWDLVKKDDKTMELFKKQIRSKFKYLPWSPIIFISAKANLRIDTIFQTIKLIQAQLKIKISTSLLNDVVQKAHMINQPPIFNGNRLSITYTTQAQGQIPTFVLFCNNPDYLHFSYARYLENKIREAFGLSYVPITLYFKSKNARNRKLSKDVKFKQTGYDLE.

EngA-type G domains follow at residues Leu2–Gly167 and Ala176–Lys351. Residues Gly8–Ser15, Asp55–Leu59, Asn118–Glu121, Gly182–Ser189, Asp229–Ile233, and Asn294–Asp297 each bind GTP. Residues Ile352 to Asn436 enclose the KH-like domain.

This sequence belongs to the TRAFAC class TrmE-Era-EngA-EngB-Septin-like GTPase superfamily. EngA (Der) GTPase family. In terms of assembly, associates with the 50S ribosomal subunit.

In terms of biological role, GTPase that plays an essential role in the late steps of ribosome biogenesis. This is GTPase Der from Mycoplasmoides gallisepticum (strain R(low / passage 15 / clone 2)) (Mycoplasma gallisepticum).